The chain runs to 417 residues: Sulfate adenylyltransferase (417 aa).

This sequence belongs to the sulfate adenylyltransferase family.

The enzyme catalyses sulfate + ATP + H(+) = adenosine 5'-phosphosulfate + diphosphate. Its pathway is sulfur metabolism; hydrogen sulfide biosynthesis; sulfite from sulfate: step 1/3. This chain is Sulfate adenylyltransferase, found in Psychrobacter cryohalolentis (strain ATCC BAA-1226 / DSM 17306 / VKM B-2378 / K5).